Reading from the N-terminus, the 506-residue chain is MTDDASTLHPTVPADAPVRVRFCPSPTGTPHVGLIRTALFNWAWARHTGGTLVFRIEDTDAARDSEESFQQILDALDWLGITWDEGVNVGGPHEPYRQSQRGEIYQDVLAKLVDSGYVYEDFSTPEEVEQRHRAKGEDPKRGYDNYDRDLTDEQKAAFRAEGRQPVLRLRMPDEDISFTDLVRGEITFKAGSVPDFVVARANGKPLYTLVNPVDDALMGITQVLRGEDLLSSTPRQIALYRALVAIGVAEFIPEFGHLPYVMGEGNKKLSKRDPESNLFHHRDNGFIPEGLLNYLALLGWSLSADEDIFTVEQLVANFDIHDVLANPARFDVKKATAINGTHVRMLDPQDFRDRLVPYLRAAGLVGETLTPRENEILDRAAPLVQERMNLLGETEGLLGFLFRGDDEIVVAPDAAKQLKDSAPEVLDAALAALEPLDDFTAEAIETALREAIVDGLGIKPRLAFGPVRTAVSGQRISPPLFESLEILGRESSLARIAALRAELAAN.

The short motif at 24–34 (PSPTGTPHVGL) is the 'HIGH' region element. Positions 124–147 (TPEEVEQRHRAKGEDPKRGYDNYD) are disordered. Over residues 128–147 (VEQRHRAKGEDPKRGYDNYD) the composition is skewed to basic and acidic residues. The 'KMSKS' region signature appears at 268 to 272 (KLSKR). ATP is bound at residue Lys-271.

Belongs to the class-I aminoacyl-tRNA synthetase family. Glutamate--tRNA ligase type 1 subfamily. As to quaternary structure, monomer.

The protein localises to the cytoplasm. It catalyses the reaction tRNA(Glu) + L-glutamate + ATP = L-glutamyl-tRNA(Glu) + AMP + diphosphate. Catalyzes the attachment of glutamate to tRNA(Glu) in a two-step reaction: glutamate is first activated by ATP to form Glu-AMP and then transferred to the acceptor end of tRNA(Glu). This chain is Glutamate--tRNA ligase, found in Kocuria rhizophila (strain ATCC 9341 / DSM 348 / NBRC 103217 / DC2201).